Here is a 200-residue protein sequence, read N- to C-terminus: ATP-dependent Clp protease proteolytic subunit (200 aa).

S97 acts as the Nucleophile in catalysis. H122 is an active-site residue.

This sequence belongs to the peptidase S14 family. Fourteen ClpP subunits assemble into 2 heptameric rings which stack back to back to give a disk-like structure with a central cavity, resembling the structure of eukaryotic proteasomes.

It is found in the cytoplasm. It carries out the reaction Hydrolysis of proteins to small peptides in the presence of ATP and magnesium. alpha-casein is the usual test substrate. In the absence of ATP, only oligopeptides shorter than five residues are hydrolyzed (such as succinyl-Leu-Tyr-|-NHMec, and Leu-Tyr-Leu-|-Tyr-Trp, in which cleavage of the -Tyr-|-Leu- and -Tyr-|-Trp bonds also occurs).. Its function is as follows. Cleaves peptides in various proteins in a process that requires ATP hydrolysis. Has a chymotrypsin-like activity. Plays a major role in the degradation of misfolded proteins. The sequence is that of ATP-dependent Clp protease proteolytic subunit from Oleidesulfovibrio alaskensis (strain ATCC BAA-1058 / DSM 17464 / G20) (Desulfovibrio alaskensis).